Reading from the N-terminus, the 216-residue chain is Transmembrane protein 186 (216 aa).

The Mitochondrial matrix segment spans residues 1 to 68 (MAFLLRVVPR…IYRFRAIRAI (68 aa)). The tract at residues 31–52 (GDSKRWVGSRSPHSREKSPGTE) is disordered. The helical transmembrane segment at 69 to 91 (GFLSRLKLAQTAVTVVALPPGFY) threads the bilayer. Topologically, residues 92–103 (CYSQGLMTLSSL) are mitochondrial intermembrane. Residues 104 to 124 (CLLGGVASFALAMLCWMSHFF) form a helical membrane-spanning segment. Over 125–216 (RRLVGILYVN…GTLATLKNSK (92 aa)) the chain is Mitochondrial matrix.

It belongs to the TMEM186 family. Part of the mitochondrial complex I assembly/MCIA complex that comprises at least the core subunits TMEM126B, NDUFAF1, ECSIT and ACAD9 and complement subunits such as COA1 and TMEM186. Interacts with MT-ND3.

It localises to the mitochondrion inner membrane. Its function is as follows. As part of the MCIA complex, required for efficient assembly of the mitochondrial complex I. In Mus musculus (Mouse), this protein is Transmembrane protein 186.